The chain runs to 188 residues: ATP-dependent protease subunit HslV (188 aa).

Threonine 7 is an active-site residue. Na(+) contacts are provided by glycine 162, cysteine 165, and serine 168.

This sequence belongs to the peptidase T1B family. HslV subfamily. A double ring-shaped homohexamer of HslV is capped on each side by a ring-shaped HslU homohexamer. The assembly of the HslU/HslV complex is dependent on binding of ATP.

It localises to the cytoplasm. The enzyme catalyses ATP-dependent cleavage of peptide bonds with broad specificity.. With respect to regulation, allosterically activated by HslU binding. Protease subunit of a proteasome-like degradation complex believed to be a general protein degrading machinery. This is ATP-dependent protease subunit HslV from Thiobacillus denitrificans (strain ATCC 25259 / T1).